We begin with the raw amino-acid sequence, 358 residues long: MKPFPRAEISSSALQNNLAVLRQQASSSQVMAVVKANGYGHGLLNVAKCLNNADGFGLARLEEALELRAGSVKARLLLLEGFFRSTDLPLLVEHDIDTVVHHESQIEMLEQATLSKPVTVWLKVDSGMHRLGVTPEQFSAVYARLTACKNVAKPIHLMTHFACADEPDNHYTQVQMQTFNQLTADLPGFRTLANSAGALYWPKSQGDWIRPGIAMYGVSPVTGDCGANHGLIPAMNLVSRLIAVREHKANQPVGYGCYWTAKQDTRLGVVAIGYGDGYPRNAPEGTPVWINGRRVPIVGRVSMDMLTVDLGHDATDQVGDDVLLWGQALPVEEVAEHIGTIAYELVTKLTPRVAVCLA.

Lys-35 (proton acceptor; specific for D-alanine) is an active-site residue. Position 35 is an N6-(pyridoxal phosphate)lysine (Lys-35). Arg-130 lines the substrate pocket. Tyr-255 (proton acceptor; specific for L-alanine) is an active-site residue. Substrate is bound at residue Met-303.

The protein belongs to the alanine racemase family. It depends on pyridoxal 5'-phosphate as a cofactor.

The enzyme catalyses L-alanine = D-alanine. It functions in the pathway amino-acid biosynthesis; D-alanine biosynthesis; D-alanine from L-alanine: step 1/1. In terms of biological role, catalyzes the interconversion of L-alanine and D-alanine. May also act on other amino acids. The chain is Alanine racemase (alr) from Shewanella oneidensis (strain ATCC 700550 / JCM 31522 / CIP 106686 / LMG 19005 / NCIMB 14063 / MR-1).